We begin with the raw amino-acid sequence, 203 residues long: Large ribosomal subunit protein uL22 (203 aa).

Over residues Pro138–Leu167 the composition is skewed to polar residues. The disordered stretch occupies residues Pro138 to Lys203. Over residues Ser168–Ala177 the composition is skewed to low complexity. A compositionally biased stretch (polar residues) spans Ala183–Leu196.

Belongs to the universal ribosomal protein uL22 family. Part of the 50S ribosomal subunit.

This protein binds specifically to 23S rRNA; its binding is stimulated by other ribosomal proteins, e.g. L4, L17, and L20. It is important during the early stages of 50S assembly. It makes multiple contacts with different domains of the 23S rRNA in the assembled 50S subunit and ribosome. In terms of biological role, the globular domain of the protein is located near the polypeptide exit tunnel on the outside of the subunit, while an extended beta-hairpin is found that lines the wall of the exit tunnel in the center of the 70S ribosome. This Mesomycoplasma hyopneumoniae (strain 7448) (Mycoplasma hyopneumoniae) protein is Large ribosomal subunit protein uL22.